The following is a 110-amino-acid chain: Multidrug transporter EmrE (110 aa).

A run of 4 helical transmembrane segments spans residues 4 to 21 (YIYL…TTLM), 34 to 52 (VGTI…QTLA), 58 to 80 (IAYA…GFFG), and 87 to 104 (AIIG…INLL).

Belongs to the drug/metabolite transporter (DMT) superfamily. Small multidrug resistance (SMR) (TC 2.A.7.1) family. Homodimer. Forms an antiparallel dimeric structure. Also forms dimers of homodimers.

It is found in the cell inner membrane. Its activity is regulated as follows. Substrate identity influences both the ground-state and transition-state energies for the conformational exchange process, emphasizing the coupling between substrate binding and transport. Multidrug efflux protein that confers resistance to a wide range of toxic compounds, including ethidium, methyl viologen, acriflavine, tetraphenylphosphonium (TPP(+)), benzalkonium, propidium, dequalinium and the aminoglycoside antibiotics streptomycin and tobramycin. Can also transport the osmoprotectants betaine and choline. The drug efflux is coupled to an influx of protons. Can couple antiport of a drug to either one or two protons, performing both electrogenic and electroneutral transport of a single substrate. Simultaneously binds and cotransports proton and drug. The chain is Multidrug transporter EmrE (emrE) from Escherichia coli (strain K12).